The following is a 571-amino-acid chain: Protein E6 homolog (571 aa).

It belongs to the chordopoxvirinae E6 family.

Its subcellular location is the virion. Its function is as follows. Late protein which may play a role in the virion morphogenesis and have therefore an indirect role on viral transcription ability. This chain is Protein E6 homolog, found in Vertebrata (FPV).